Consider the following 256-residue polypeptide: Pimeloyl-[acyl-carrier protein] methyl ester esterase (256 aa).

The AB hydrolase-1 domain occupies 15-242; the sequence is HLVLLHGWGL…AAHAPFISHP (228 aa). Residues Trp-22, 82–83, and 143–147 each bind substrate; these read SL and FLALQ. Ser-82 functions as the Nucleophile in the catalytic mechanism. Active-site residues include Asp-207 and His-235. His-235 contacts substrate.

This sequence belongs to the AB hydrolase superfamily. Carboxylesterase BioH family. In terms of assembly, monomer.

It is found in the cytoplasm. It catalyses the reaction 6-carboxyhexanoyl-[ACP] methyl ester + H2O = 6-carboxyhexanoyl-[ACP] + methanol + H(+). It participates in cofactor biosynthesis; biotin biosynthesis. Functionally, the physiological role of BioH is to remove the methyl group introduced by BioC when the pimeloyl moiety is complete. It allows to synthesize pimeloyl-ACP via the fatty acid synthetic pathway through the hydrolysis of the ester bonds of pimeloyl-ACP esters. This Salmonella dublin (strain CT_02021853) protein is Pimeloyl-[acyl-carrier protein] methyl ester esterase.